We begin with the raw amino-acid sequence, 163 residues long: Pheromone-binding protein 1 (163 aa).

The first 21 residues, 1–21 (MLGKISLLLLPVFVAINLVHS), serve as a signal peptide directing secretion. Intrachain disulfides connect cysteine 40–cysteine 75, cysteine 71–cysteine 129, and cysteine 118–cysteine 138.

The protein belongs to the PBP/GOBP family. In terms of tissue distribution, antenna.

Its function is as follows. This major soluble protein in olfactory sensilla of male moths might serve to solubilize the extremely hydrophobic pheromone molecules and to transport pheromone through the aqueous lymph to receptors located on olfactory cilia. This chain is Pheromone-binding protein 1, found in Antheraea pernyi (Chinese oak silk moth).